The following is a 134-amino-acid chain: Holo-[acyl-carrier-protein] synthase (134 aa).

Positions 8 and 58 each coordinate Mg(2+).

Belongs to the P-Pant transferase superfamily. AcpS family. It depends on Mg(2+) as a cofactor.

It localises to the cytoplasm. The enzyme catalyses apo-[ACP] + CoA = holo-[ACP] + adenosine 3',5'-bisphosphate + H(+). Functionally, transfers the 4'-phosphopantetheine moiety from coenzyme A to a Ser of acyl-carrier-protein. The protein is Holo-[acyl-carrier-protein] synthase of Acidiphilium cryptum (strain JF-5).